The primary structure comprises 530 residues: Phosphoenolpyruvate carboxykinase (ATP) (530 aa).

The substrate site is built by Arg58, Tyr195, and Lys201. Residues Lys201, His220, and 236–244 (GLSGTGKTT) each bind ATP. Residues Lys201 and His220 each contribute to the Mn(2+) site. Asp257 is a binding site for Mn(2+). ATP-binding positions include Glu285, Arg321, 440–441 (RI), and Thr446. Position 321 (Arg321) interacts with substrate.

The protein belongs to the phosphoenolpyruvate carboxykinase (ATP) family. It depends on Mn(2+) as a cofactor.

Its subcellular location is the cytoplasm. The enzyme catalyses oxaloacetate + ATP = phosphoenolpyruvate + ADP + CO2. It participates in carbohydrate biosynthesis; gluconeogenesis. Its function is as follows. Involved in the gluconeogenesis. Catalyzes the conversion of oxaloacetate (OAA) to phosphoenolpyruvate (PEP) through direct phosphoryl transfer between the nucleoside triphosphate and OAA. The chain is Phosphoenolpyruvate carboxykinase (ATP) from Staphylococcus haemolyticus (strain JCSC1435).